The primary structure comprises 226 residues: Thiopurine S-methyltransferase (226 aa).

S-adenosyl-L-methionine contacts are provided by tryptophan 16, methionine 51, glutamate 72, and arginine 131.

It belongs to the class I-like SAM-binding methyltransferase superfamily. TPMT family.

Its subcellular location is the cytoplasm. The catalysed reaction is S-adenosyl-L-methionine + a thiopurine = S-adenosyl-L-homocysteine + a thiopurine S-methylether.. This chain is Thiopurine S-methyltransferase, found in Francisella tularensis subsp. novicida (strain U112).